Consider the following 397-residue polypeptide: pH-sensitive adenylate cyclase MT1302 (397 aa).

The regulatory domain stretch occupies residues 1 to 191 (MTDHVREADD…IQDMLFMQLR (191 aa)). Positions 192-206 (HMMETEAVNAGERAA) are linker. The segment at 211-397 (PGARQVTVAF…QDDDLAGSSP (187 aa)) is catalytic domain. Positions 217–325 (TVAFADLVGF…SPVNVASRVT (109 aa)) constitute a Guanylate cyclase domain. Asp222 serves as a coordination point for Mn(2+). Lys261 is a substrate binding site. Mn(2+) is bound at residue Asp265. Arg298 provides a ligand contact to ATP. Asp312 provides a ligand contact to substrate.

The protein belongs to the adenylyl cyclase class-4/guanylyl cyclase family. Homodimer. It depends on Mn(2+) as a cofactor. Mg(2+) serves as cofactor.

It carries out the reaction ATP = 3',5'-cyclic AMP + diphosphate. Its function is as follows. Catalyzes the formation of the second messenger cAMP. This chain is pH-sensitive adenylate cyclase MT1302, found in Mycobacterium tuberculosis (strain CDC 1551 / Oshkosh).